Here is a 395-residue protein sequence, read N- to C-terminus: Elongation factor Tu (395 aa).

One can recognise a tr-type G domain in the interval 10 to 204 (KPHVNIGTIG…TVDEYIPTPQ (195 aa)). The interval 19 to 26 (GHVDHGKT) is G1. A GTP-binding site is contributed by 19–26 (GHVDHGKT). Mg(2+) is bound at residue threonine 26. The interval 60 to 64 (GITIN) is G2. The G3 stretch occupies residues 81 to 84 (DAPG). GTP contacts are provided by residues 81-85 (DAPGH) and 136-139 (NKCD). A G4 region spans residues 136-139 (NKCD). Residues 174–176 (SAL) are G5.

Belongs to the TRAFAC class translation factor GTPase superfamily. Classic translation factor GTPase family. EF-Tu/EF-1A subfamily. As to quaternary structure, monomer.

It localises to the cytoplasm. It carries out the reaction GTP + H2O = GDP + phosphate + H(+). In terms of biological role, GTP hydrolase that promotes the GTP-dependent binding of aminoacyl-tRNA to the A-site of ribosomes during protein biosynthesis. The protein is Elongation factor Tu of Ligilactobacillus salivarius (strain UCC118) (Lactobacillus salivarius).